The primary structure comprises 654 residues: tRNA 5-methylaminomethyl-2-thiouridine biosynthesis bifunctional protein MnmC (654 aa).

The tRNA (mnm(5)s(2)U34)-methyltransferase stretch occupies residues 1–236; it reads MPTLLQHAQI…KWEVMSGAYV (236 aa). An FAD-dependent cmnm(5)s(2)U34 oxidoreductase region spans residues 262–654; it reads IGAGLAGSSS…FGLRRLIRGK (393 aa).

The protein in the N-terminal section; belongs to the methyltransferase superfamily. tRNA (mnm(5)s(2)U34)-methyltransferase family. It in the C-terminal section; belongs to the DAO family. It depends on FAD as a cofactor.

It is found in the cytoplasm. The catalysed reaction is 5-aminomethyl-2-thiouridine(34) in tRNA + S-adenosyl-L-methionine = 5-methylaminomethyl-2-thiouridine(34) in tRNA + S-adenosyl-L-homocysteine + H(+). Functionally, catalyzes the last two steps in the biosynthesis of 5-methylaminomethyl-2-thiouridine (mnm(5)s(2)U) at the wobble position (U34) in tRNA. Catalyzes the FAD-dependent demodification of cmnm(5)s(2)U34 to nm(5)s(2)U34, followed by the transfer of a methyl group from S-adenosyl-L-methionine to nm(5)s(2)U34, to form mnm(5)s(2)U34. In Pseudomonas putida (strain ATCC 47054 / DSM 6125 / CFBP 8728 / NCIMB 11950 / KT2440), this protein is tRNA 5-methylaminomethyl-2-thiouridine biosynthesis bifunctional protein MnmC.